Reading from the N-terminus, the 495-residue chain is Ferruginol synthase (495 aa).

A topological domain (lumenal) is located at residue Met-1. The helical transmembrane segment at 2–22 threads the bilayer; the sequence is DSFPLLAALFFIAATITFLSF. Over 23–495 the chain is Cytoplasmic; that stretch reads RRRRNLPPGP…PLRIIPIVKS (473 aa). Cys-437 is a heme binding site.

It belongs to the cytochrome P450 family. Heme is required as a cofactor. In terms of tissue distribution, expression is more abundant in the rhizome.

The protein resides in the endoplasmic reticulum membrane. The catalysed reaction is abieta-8,11,13-triene + reduced [NADPH--hemoprotein reductase] + O2 = ferruginol + oxidized [NADPH--hemoprotein reductase] + H2O + H(+). Its function is as follows. Cytochrome P450 enzyme (CYP) which catalyzes a unique two-electron oxidation cascade on abieta-8,11,13-triene to produce ferruginol, an intermediate in tanshinone biosynthesis. The sequence is that of Ferruginol synthase from Salvia miltiorrhiza (Chinese sage).